A 346-amino-acid polypeptide reads, in one-letter code: Iron uptake protein A2 (346 aa).

A signal peptide (tat-type signal) is located at residues 1-31; that stretch reads MTTKISRRTFFVGGTALTALVVANLPRRASA. Fe cation-binding residues include His-43, Tyr-44, Tyr-169, Tyr-225, and Tyr-226.

This sequence belongs to the bacterial solute-binding protein 1 family. In terms of processing, predicted to be exported by the Tat system. The position of the signal peptide cleavage has not been experimentally proven.

Its subcellular location is the cellular thylakoid membrane. The protein resides in the periplasm. Its function is as follows. Probably part of a periplasmic ABC transporter complex futA1A2BC (TC 3.A.1.10.2) involved in Fe(3+) ion import (ferric iron). This protein and futA1 (slr1295) are subunit proteins that have redundant or overlapping substrate-binding functions. The differing subcellular locations of futA1 (predominantly thylakoid lumen) and futA2 (predominantly periplasmic) suggest they may fulfill different roles. In terms of biological role, plays an important role in protecting the acceptor side of photosystem II (PSII) against oxidative damage, especially under iron-limiting growth conditions. Plays an undefined role in copper supply to thylakoid proteins. In Synechocystis sp. (strain ATCC 27184 / PCC 6803 / Kazusa), this protein is Iron uptake protein A2 (futA2).